The primary structure comprises 603 residues: Polypeptide N-acetylgalactosaminyltransferase 10 (603 aa).

The Cytoplasmic segment spans residues 1 to 11 (MRRKEKRLLQA). The helical; Signal-anchor for type II membrane protein transmembrane segment at 12-31 (VALVLAALVLLPNVGLWALY) threads the bilayer. The Lumenal portion of the chain corresponds to 32–603 (RERQPDGTPG…STVLEKFNRN (572 aa)). The segment at 38 to 59 (GTPGGSGAAVAPAAGQGSHSRQ) is disordered. The span at 45-55 (AAVAPAAGQGS) shows a compositional bias: low complexity. Asparagine 124 and asparagine 146 each carry an N-linked (GlcNAc...) asparagine glycan. Intrachain disulfides connect cysteine 135–cysteine 365, cysteine 356–cysteine 432, cysteine 471–cysteine 488, cysteine 523–cysteine 538, and cysteine 563–cysteine 578. The catalytic subdomain A stretch occupies residues 144 to 253 (LPNTSIIIPF…VNWLPPLLDR (110 aa)). Histidine 154, glutamate 156, aspartate 185, and arginine 214 together coordinate substrate. Aspartate 237 lines the Mn(2+) pocket. Serine 238 serves as a coordination point for substrate. Mn(2+) is bound at residue histidine 239. The tract at residues 311-373 (PFESPVMAGG…PCSRVGHIYR (63 aa)) is catalytic subdomain B. Tryptophan 342 provides a ligand contact to substrate. Position 370 (histidine 370) interacts with Mn(2+). Residues arginine 373 and tyrosine 378 each contribute to the substrate site. Positions 373-384 (RKYVPYKVPAGV) are flexible loop. The region spanning 458–590 (AAWGEIRNVG…SSLTQQWLFE (133 aa)) is the Ricin B-type lectin domain. Asparagine 593 is a glycosylation site (N-linked (GlcNAc...) asparagine).

The protein belongs to the glycosyltransferase 2 family. GalNAc-T subfamily. The cofactor is Mn(2+). As to expression, widely expressed. Expressed at high level in small intestine, and at intermediate levels in stomach, pancreas, ovary, thyroid gland and spleen. Weakly expressed in other tissues.

It is found in the golgi apparatus membrane. The catalysed reaction is L-seryl-[protein] + UDP-N-acetyl-alpha-D-galactosamine = a 3-O-[N-acetyl-alpha-D-galactosaminyl]-L-seryl-[protein] + UDP + H(+). The enzyme catalyses L-threonyl-[protein] + UDP-N-acetyl-alpha-D-galactosamine = a 3-O-[N-acetyl-alpha-D-galactosaminyl]-L-threonyl-[protein] + UDP + H(+). Its pathway is protein modification; protein glycosylation. Functionally, catalyzes the initial reaction in O-linked oligosaccharide biosynthesis, the transfer of an N-acetyl-D-galactosamine residue to a serine or threonine residue on the protein receptor. Has activity toward Muc5Ac and EA2 peptide substrates. The chain is Polypeptide N-acetylgalactosaminyltransferase 10 (GALNT10) from Homo sapiens (Human).